The sequence spans 328 residues: 2-oxoglutarate-dependent dioxygenase gloE (328 aa).

Positions 170–271 (TRTNLTFLKY…RYTLAYFLRP (102 aa)) constitute a Fe2OG dioxygenase domain. Residues histidine 194, aspartate 196, and histidine 249 each coordinate Fe cation. Residue arginine 262 coordinates 2-oxoglutarate.

It belongs to the iron/ascorbate-dependent oxidoreductase family. Fe(2+) serves as cofactor.

It participates in mycotoxin biosynthesis. In terms of biological role, 2-oxoglutarate-dependent dioxygenase; part of the gene cluster that mediates the biosynthesis of pneumocandins, lipohexapeptides of the echinocandin family that prevent fungal cell wall formation by non-competitive inhibition of beta-1,3-glucan synthase. The 10,12-dimethylmyristoyl side chain is synthesized by the reducing polyketide synthase gloL/GLPKS4. The thioesterase gloN/GLHYD exclusively interacts with gloL/GLPKS4 to maintain turnover of the polyketide side chain. The 10R,12S-dimethylmyristic acid is then transferred to the first thiolation domain of the nonribosomal peptide synthetase gloA/GLNRPS4 by the acyl-AMP ligase gloD/GLligase, followed by its acylation to L-ornithine to trigger elongation of the cyclic hexapeptide. L-ornithine, 4R-hydroxyl-L-proline (generated from L-proline by the dioxygenase gloF/GLOXY2), 3S-hydroxyl-L-homotyrosine (generated by gloG/GLHtyB, gloH/GLHtyA, gloI/GLHtyC, gloJ/GLHtyD and hydroxylated at C-3 by the dioxygenase gloM/GLOXY1), 3R-hydroxyl-L-glutamine (generated from L-glutamine probably by the dioxygenase gloE/GLOXY3) and 3S-hydroxyl-L-proline (generated from L-proline by the dioxygenase gloF/GLOXY2 to yield pneumocandin B0), or 3S-hydroxyl-4S-methyl-L-proline (generated from L-leucine by the dioxygenase gloC/GLOXY4 to yield pneumocandin A0) are sequentially added to the growing chain. The last C domain of gloA/GLNRPS4 is proposed to be responsible for cyclization by condensation to form the peptide bond between L-ornithine and 3S-hydroxyl-4S-methyl-L-proline (for pneumocandin A0) or 3S-hydroxyl-L-proline (for pneumocandin B0). Finally, the subsequent C-4 hydroxylation of 3S-hydroxyl-L-homotyrosine and L-ornithine dihydroxylation at C-4 and C-5 are performed by the cytochrome P450 monooxygenases gloP/GLP450-1 and gloO/GLP450-2, respectively. This Glarea lozoyensis (strain ATCC 20868 / MF5171) protein is 2-oxoglutarate-dependent dioxygenase gloE.